A 536-amino-acid polypeptide reads, in one-letter code: Membrane protein insertase YidC (536 aa).

Helical transmembrane passes span 7–27 (LLVM…QQDF), 332–352 (FWLL…IMGV), 411–431 (MGGC…YWTF), 449–469 (LSAQ…MFLL), and 488–508 (FMPV…VLYW).

This sequence belongs to the OXA1/ALB3/YidC family. Type 1 subfamily. As to quaternary structure, interacts with the Sec translocase complex via SecD. Specifically interacts with transmembrane segments of nascent integral membrane proteins during membrane integration.

It is found in the cell inner membrane. Its function is as follows. Required for the insertion and/or proper folding and/or complex formation of integral membrane proteins into the membrane. Involved in integration of membrane proteins that insert both dependently and independently of the Sec translocase complex, as well as at least some lipoproteins. Aids folding of multispanning membrane proteins. The chain is Membrane protein insertase YidC from Haemophilus ducreyi (strain 35000HP / ATCC 700724).